Here is a 207-residue protein sequence, read N- to C-terminus: Large ribosomal subunit protein uL4 (207 aa).

Residues 57-78 (VAGGGKKPWRQKGTGRARHGSI) are disordered. A compositionally biased stretch (basic residues) spans 63–77 (KPWRQKGTGRARHGS).

The protein belongs to the universal ribosomal protein uL4 family. Part of the 50S ribosomal subunit.

In terms of biological role, one of the primary rRNA binding proteins, this protein initially binds near the 5'-end of the 23S rRNA. It is important during the early stages of 50S assembly. It makes multiple contacts with different domains of the 23S rRNA in the assembled 50S subunit and ribosome. Forms part of the polypeptide exit tunnel. The chain is Large ribosomal subunit protein uL4 from Onion yellows phytoplasma (strain OY-M).